A 262-amino-acid chain; its full sequence is Phosphate import ATP-binding protein PstB (262 aa).

An ABC transporter domain is found at 15–257 (AKASNLNLWY…PQKSKTEQYI (243 aa)). 47 to 54 (GPSGCGKS) is an ATP binding site.

Belongs to the ABC transporter superfamily. Phosphate importer (TC 3.A.1.7) family. The complex is composed of two ATP-binding proteins (PstB), two transmembrane proteins (PstC and PstA) and a solute-binding protein (PstS).

Its subcellular location is the cell inner membrane. It catalyses the reaction phosphate(out) + ATP + H2O = ADP + 2 phosphate(in) + H(+). Part of the ABC transporter complex PstSACB involved in phosphate import. Responsible for energy coupling to the transport system. The chain is Phosphate import ATP-binding protein PstB from Wolinella succinogenes (strain ATCC 29543 / DSM 1740 / CCUG 13145 / JCM 31913 / LMG 7466 / NCTC 11488 / FDC 602W) (Vibrio succinogenes).